The following is a 283-amino-acid chain: Thymidylate synthase (283 aa).

DUMP is bound at residue Arg22. Cys160 serves as the catalytic Nucleophile. DUMP is bound by residues 180 to 183 (RSCD), Asn191, and 221 to 223 (HIY). Asp183 contacts (6R)-5,10-methylene-5,6,7,8-tetrahydrofolate. Residue Ser282 coordinates (6R)-5,10-methylene-5,6,7,8-tetrahydrofolate.

This sequence belongs to the thymidylate synthase family. Bacterial-type ThyA subfamily. Homodimer.

Its subcellular location is the cytoplasm. The enzyme catalyses dUMP + (6R)-5,10-methylene-5,6,7,8-tetrahydrofolate = 7,8-dihydrofolate + dTMP. The protein operates within pyrimidine metabolism; dTTP biosynthesis. In terms of biological role, catalyzes the reductive methylation of 2'-deoxyuridine-5'-monophosphate (dUMP) to 2'-deoxythymidine-5'-monophosphate (dTMP) while utilizing 5,10-methylenetetrahydrofolate (mTHF) as the methyl donor and reductant in the reaction, yielding dihydrofolate (DHF) as a by-product. This enzymatic reaction provides an intracellular de novo source of dTMP, an essential precursor for DNA biosynthesis. The sequence is that of Thymidylate synthase from Aliivibrio fischeri (strain ATCC 700601 / ES114) (Vibrio fischeri).